Here is a 344-residue protein sequence, read N- to C-terminus: Nicotinate-nucleotide--dimethylbenzimidazole phosphoribosyltransferase (344 aa).

Glutamate 310 functions as the Proton acceptor in the catalytic mechanism.

Belongs to the CobT family.

It carries out the reaction 5,6-dimethylbenzimidazole + nicotinate beta-D-ribonucleotide = alpha-ribazole 5'-phosphate + nicotinate + H(+). It participates in nucleoside biosynthesis; alpha-ribazole biosynthesis; alpha-ribazole from 5,6-dimethylbenzimidazole: step 1/2. In terms of biological role, catalyzes the synthesis of alpha-ribazole-5'-phosphate from nicotinate mononucleotide (NAMN) and 5,6-dimethylbenzimidazole (DMB). The chain is Nicotinate-nucleotide--dimethylbenzimidazole phosphoribosyltransferase from Shewanella amazonensis (strain ATCC BAA-1098 / SB2B).